A 731-amino-acid chain; its full sequence is Cucumisin (731 aa).

The signal sequence occupies residues 1–22; sequence MSSSLIFKLFFFSLFFSNRLAS. Residues 23–110 constitute a propeptide, activation peptide; that stretch reads RLDSDDDGKN…VFLNEMNELH (88 aa). Residues 34–110 form the Inhibitor I9 domain; sequence YIVYMGRKLE…VFLNEMNELH (77 aa). The Peptidase S8 domain occupies 114-584; sequence SWDFLGFPLT…SGHVNPLKAV (471 aa). The Charge relay system role is filled by aspartate 140. Cysteine 166 and cysteine 174 are oxidised to a cystine. Histidine 204 (charge relay system) is an active-site residue. Intrachain disulfides connect cysteine 245-cysteine 250 and cysteine 380-cysteine 397. A glycan (N-linked (GlcNAc...) asparagine) is linked at asparagine 466. Serine 525 functions as the Charge relay system in the catalytic mechanism. The propeptide occupies 616–731; the sequence is GDYSACTSGN…RSPITITSLV (116 aa). Asparagine 652 is a glycosylation site (N-linked (GlcNAc...) asparagine).

This sequence belongs to the peptidase S8 family. Monomer and dimer. Post-translationally, the C-terminal propeptide is autocleaved. Specifically expressed in fruits. Expressed in sarcocarp (at protein level).

It localises to the secreted. The enzyme catalyses Hydrolysis of proteins with broad specificity.. The chain is Cucumisin from Cucumis melo (Muskmelon).